Here is a 371-residue protein sequence, read N- to C-terminus: MTIDNKIRHIVKEFKAYVPGKSKEEIARNYNINPDEIIKLGSNENPWGSSPKIKEEILKELPNIHQYPEPVNPILMEELSKFTNIPKENIVVGGDGADEIIDTMMRILIDKDDEVIIPIPTFTQYRISAKIYGANIKYAKFDKEKDFKLDVDSVLNNITDKTKIIFLCTPNNPTGNIIDKKDIEKIINSTDALVMIDHAYIEYSKEEYDLTEFALKYDNVLILRTFSKVFGLAGQRIGYGITSKKIVDYMMRVKPIFSITRLSQICAITALRDKEFFEKSKNDGIKSMEILYNGLKEFKELKVYPSEANYLLVEVKNGMSSGEFCVELLKRGVIVRDCKSFEGLDGEYVRVAIGTFEEDRRFLEILKEIVN.

Lys228 carries the post-translational modification N6-(pyridoxal phosphate)lysine.

Belongs to the class-II pyridoxal-phosphate-dependent aminotransferase family. Histidinol-phosphate aminotransferase subfamily. Pyridoxal 5'-phosphate serves as cofactor.

The catalysed reaction is L-histidinol phosphate + 2-oxoglutarate = 3-(imidazol-4-yl)-2-oxopropyl phosphate + L-glutamate. It functions in the pathway amino-acid biosynthesis; L-histidine biosynthesis; L-histidine from 5-phospho-alpha-D-ribose 1-diphosphate: step 7/9. The polypeptide is Histidinol-phosphate aminotransferase (Methanococcus aeolicus (strain ATCC BAA-1280 / DSM 17508 / OCM 812 / Nankai-3)).